The following is a 139-amino-acid chain: Small ribosomal subunit protein eS6 (139 aa).

This sequence belongs to the eukaryotic ribosomal protein eS6 family.

This Methanosarcina barkeri (strain Fusaro / DSM 804) protein is Small ribosomal subunit protein eS6.